The primary structure comprises 617 residues: MPALRSRTTTHGRNMAGARALWRATGMTDDDFGKPIVAVANSFTEFVPGHVHLRNLGSLVAGAVAEAGGVAREFNTIAVDDGIAMGHGGMLYSLPSRELIADSVEYMVNAHCADALVCISNCDKITPGMLLAALRLNIPTVFVSGGAMESGNAVISGGTARSRLDLITAMSAAVNPDVSDGDLSTIERSACPTCGSCSGMFTANSMNCLTEAIGLSLPGNGSTLATAAARRELFVEAGRLVVDLARRYYEKDDEAVLPRSIATAAAFRNAFAVDVAMGGSTNTVLHLLAAAVEAGVDVTLADIDQISRTVPCLCKVAPSSTRYYMEDVHRAGGIPAILGELDRAGLLDPDPHTVHSASLREFLDRWDVRGPSPSPDAIELFHAAPGGVRTIEPFSSTNRWDTLDTDARDGCIRSVEHAYSAEGGLAVLFGNLAVEGAVVKTAGVDEGQWTFRGPALVVESQEEAVDAILTGRVKAGNVIIVRYEGPRGGPGMQEMLYPTAFLKGRGLGPKCALITDGRFSGGSSGLSIGHVSPEAAHGGTIALVRDGDIIEIDIPARRLELVVSDEELASRRAALEAAGGYRPTGRERPVSMALRAYAAMATSASTGAARDVGLLGG.

Asp81 contacts Mg(2+). Position 122 (Cys122) interacts with [2Fe-2S] cluster. Residues Asp123 and Lys124 each contribute to the Mg(2+) site. Lys124 carries the N6-carboxylysine modification. Position 197 (Cys197) interacts with [2Fe-2S] cluster. Glu494 serves as a coordination point for Mg(2+). Ser520 serves as the catalytic Proton acceptor.

The protein belongs to the IlvD/Edd family. As to quaternary structure, homodimer. [2Fe-2S] cluster is required as a cofactor. The cofactor is Mg(2+).

It carries out the reaction (2R)-2,3-dihydroxy-3-methylbutanoate = 3-methyl-2-oxobutanoate + H2O. The enzyme catalyses (2R,3R)-2,3-dihydroxy-3-methylpentanoate = (S)-3-methyl-2-oxopentanoate + H2O. It functions in the pathway amino-acid biosynthesis; L-isoleucine biosynthesis; L-isoleucine from 2-oxobutanoate: step 3/4. Its pathway is amino-acid biosynthesis; L-valine biosynthesis; L-valine from pyruvate: step 3/4. Its function is as follows. Functions in the biosynthesis of branched-chain amino acids. Catalyzes the dehydration of (2R,3R)-2,3-dihydroxy-3-methylpentanoate (2,3-dihydroxy-3-methylvalerate) into 2-oxo-3-methylpentanoate (2-oxo-3-methylvalerate) and of (2R)-2,3-dihydroxy-3-methylbutanoate (2,3-dihydroxyisovalerate) into 2-oxo-3-methylbutanoate (2-oxoisovalerate), the penultimate precursor to L-isoleucine and L-valine, respectively. This Frankia casuarinae (strain DSM 45818 / CECT 9043 / HFP020203 / CcI3) protein is Dihydroxy-acid dehydratase.